We begin with the raw amino-acid sequence, 429 residues long: MAVWALGINHSTAPLDLRGRFAFALDQIAPRLQGLRQSLSSHPGVETAMLSTCNRTEIYCAAEQAAIDHTLGWLAHSGGVSTALLRAHSYTLQDSRAARHAFRVASGLDSMVLGEAQILGQMKDAVRAAETAGVLGSTLNQLFQRSFAVAKEVRSSTEIGAHSISMAAAAVRLAGQLFEDLSQIRVLFVGAGAMIALCATHFAAKNPLGLALANRTLERGEQLAARFGATVLRLADLPERLHEFDAVISCTASSLPIIGLGAVERALKKRRHRPMFMVDLAVPRDIEPEVKALGDVYLYTVDDLASVVQTGQASRQAAVAQAEAIIDAGVQSFMHWLAQRNPVGGVVPLIRQLNAQTEVWRASEIARAKKLLAKGEAPDAVLDALARGLTQKMLHGTMAELRAGDADMRAQTAQTVARLFLRAQSNHDL.

Substrate is bound by residues 52 to 55 (TCNR), Ser110, 115 to 117 (EAQ), and Gln121. Catalysis depends on Cys53, which acts as the Nucleophile. 190–195 (GAGAMI) serves as a coordination point for NADP(+).

This sequence belongs to the glutamyl-tRNA reductase family. Homodimer.

It catalyses the reaction (S)-4-amino-5-oxopentanoate + tRNA(Glu) + NADP(+) = L-glutamyl-tRNA(Glu) + NADPH + H(+). The protein operates within porphyrin-containing compound metabolism; protoporphyrin-IX biosynthesis; 5-aminolevulinate from L-glutamyl-tRNA(Glu): step 1/2. Functionally, catalyzes the NADPH-dependent reduction of glutamyl-tRNA(Glu) to glutamate 1-semialdehyde (GSA). The chain is Glutamyl-tRNA reductase from Verminephrobacter eiseniae (strain EF01-2).